Consider the following 402-residue polypeptide: Acyl-[acyl-carrier-protein] desaturase 3, chloroplastic (402 aa).

Residues 1-32 (MSLTGCLPPRPPCSMRRRTSGGGASVSPVVAM) constitute a chloroplast transit peptide. The segment at 1 to 66 (MSLTGCLPPR…EVPPQVTHTL (66 aa)) is disordered. Glutamate 139, glutamate 178, histidine 181, glutamate 231, glutamate 264, and histidine 267 together coordinate Fe cation.

This sequence belongs to the fatty acid desaturase type 2 family. As to quaternary structure, homodimer. It depends on Fe(2+) as a cofactor.

It localises to the plastid. It is found in the chloroplast. It participates in lipid metabolism; fatty acid metabolism. Introduces a cis double bond in the acyl chain of an acyl-[acyl-carrier protein]. This chain is Acyl-[acyl-carrier-protein] desaturase 3, chloroplastic, found in Oryza sativa subsp. japonica (Rice).